A 427-amino-acid polypeptide reads, in one-letter code: Putative tyrosine recombinase XerC (427 aa).

The region spanning 1–81 (MTPQQLTEEY…HLRTIWGYAI (81 aa)) is the Core-binding (CB) domain. The 190-residue stretch at 116–305 (RARSWLSMQV…DYDHMRAVLH (190 aa)) folds into the Tyr recombinase domain. Active-site residues include arginine 156, lysine 183, histidine 256, arginine 259, and histidine 283. Residue tyrosine 292 is the O-(3'-phospho-DNA)-tyrosine intermediate of the active site. Disordered regions lie at residues 323-384 (SGSP…PPDT) and 401-427 (RAAT…DSLA). A compositionally biased stretch (basic and acidic residues) spans 350–362 (ARTEPSEPREHTQ). A compositionally biased stretch (low complexity) spans 402 to 413 (AATASAVPAATS).

It belongs to the 'phage' integrase family.

It is found in the cytoplasm. Site-specific tyrosine recombinase, which acts by catalyzing the cutting and rejoining of the recombining DNA molecules. The sequence is that of Putative tyrosine recombinase XerC from Pseudomonas aeruginosa.